The following is a 307-amino-acid chain: Glutathione synthetase (307 aa).

An ATP-grasp domain is found at 120–304 (KLGALRFSRW…LADQTIERLR (185 aa)). ATP is bound at residue 146-202 (AREQGDVVLKPLGGRAGLGVIRVQAEAPGLKALLELVTEQERLPVMAQRFLPDVTEG). The Mg(2+) site is built by Glu-275 and Asn-277.

This sequence belongs to the prokaryotic GSH synthase family. Mg(2+) serves as cofactor. It depends on Mn(2+) as a cofactor.

It carries out the reaction gamma-L-glutamyl-L-cysteine + glycine + ATP = glutathione + ADP + phosphate + H(+). It participates in sulfur metabolism; glutathione biosynthesis; glutathione from L-cysteine and L-glutamate: step 2/2. The polypeptide is Glutathione synthetase (Parasynechococcus marenigrum (strain WH8102)).